We begin with the raw amino-acid sequence, 220 residues long: Pyrrolidone-carboxylate peptidase (220 aa).

Residues E80, C143, and H167 contribute to the active site.

It belongs to the peptidase C15 family. In terms of assembly, homotetramer.

Its subcellular location is the cytoplasm. It carries out the reaction Release of an N-terminal pyroglutamyl group from a polypeptide, the second amino acid generally not being Pro.. Removes 5-oxoproline from various penultimate amino acid residues except L-proline. The protein is Pyrrolidone-carboxylate peptidase (pcp) of Thermococcus litoralis (strain ATCC 51850 / DSM 5473 / JCM 8560 / NS-C).